Here is a 137-residue protein sequence, read N- to C-terminus: Protein PsiE homolog (137 aa).

4 consecutive transmembrane segments (helical) span residues 13–35 (ILLR…AFLI), 55–77 (YYMT…IVKY), 84–103 (FPLR…FIIV), and 107–129 (SATS…FLAN).

The protein belongs to the PsiE family.

It is found in the cell membrane. This chain is Protein PsiE homolog, found in Listeria monocytogenes serotype 4b (strain F2365).